Here is a 431-residue protein sequence, read N- to C-terminus: tRNA (adenine(37)-N6)-methyltransferase (431 aa).

A TsaA-like domain is found at 30–168 (TEPIGYLESC…YIADYDSPQN (139 aa)). S-adenosyl-L-methionine is bound by residues 47-49 (PRQ), 90-91 (HK), Arg117, Leu127, and 148-151 (IDGT). Positions 196–242 (LSGRGKVQPRQSTKERPKCLEDRTSGENSQKSRDMSEIQHTLPEDRE) are disordered. Over residues 207–242 (STKERPKCLEDRTSGENSQKSRDMSEIQHTLPEDRE) the composition is skewed to basic and acidic residues.

Belongs to the tRNA methyltransferase O family.

The enzyme catalyses N(6)-L-threonylcarbamoyladenosine(37) in tRNA + S-adenosyl-L-methionine = N(6)-methyl,N(6)-L-threonylcarbamoyladenosine(37) in tRNA + S-adenosyl-L-homocysteine + H(+). Functionally, S-adenosyl-L-methionine-dependent methyltransferase responsible for the addition of the methyl group in the formation of N6-methyl-N6-threonylcarbamoyladenosine at position 37 (m(6)t(6)A37) of the tRNA anticodon loop of tRNA(Ser)(GCU). The methyl group of m(6)t(6)A37 may improve the efficiency of the tRNA decoding ability. May bind to tRNA. The polypeptide is tRNA (adenine(37)-N6)-methyltransferase (Mus musculus (Mouse)).